We begin with the raw amino-acid sequence, 391 residues long: 23S rRNA (uracil(747)-C(5))-methyltransferase RlmC (391 aa).

[4Fe-4S] cluster-binding residues include cysteine 5, cysteine 13, cysteine 16, and cysteine 95. The S-adenosyl-L-methionine site is built by glutamine 220, phenylalanine 249, glutamate 276, and asparagine 322. Cysteine 349 acts as the Nucleophile in catalysis.

The protein belongs to the class I-like SAM-binding methyltransferase superfamily. RNA M5U methyltransferase family. RlmC subfamily.

It carries out the reaction uridine(747) in 23S rRNA + S-adenosyl-L-methionine = 5-methyluridine(747) in 23S rRNA + S-adenosyl-L-homocysteine + H(+). In terms of biological role, catalyzes the formation of 5-methyl-uridine at position 747 (m5U747) in 23S rRNA. This is 23S rRNA (uracil(747)-C(5))-methyltransferase RlmC from Actinobacillus pleuropneumoniae serotype 5b (strain L20).